A 393-amino-acid polypeptide reads, in one-letter code: Putative mitochondrial cysteine synthase (393 aa).

A helical transmembrane segment spans residues 12 to 31; the sequence is LAWRECISIASVLIGAYASY. Lysine 86 is subject to N6-(pyridoxal phosphate)lysine. Pyridoxal 5'-phosphate is bound by residues 230 to 234 and serine 338; that span reads GTGGT.

This sequence belongs to the cysteine synthase/cystathionine beta-synthase family. Pyridoxal 5'-phosphate is required as a cofactor.

It localises to the mitochondrion. The protein resides in the mitochondrion outer membrane. It carries out the reaction O-acetyl-L-serine + hydrogen sulfide = L-cysteine + acetate. In terms of biological role, putative cysteine synthase that catalyzes the conversion of O-acetyl-L-serine (OAS) into cysteine, the last step in the cysteine biosynthesis pathway. However, this CS-like protein is unlikely to function in cysteine biosynthesis. It seems that in S.cerevisiae cysteine biosynthesis occurs exclusively through the cystathionine pathway and not via direct incorporation of sulfur into OAS. The chain is Putative mitochondrial cysteine synthase from Saccharomyces cerevisiae (strain ATCC 204508 / S288c) (Baker's yeast).